We begin with the raw amino-acid sequence, 541 residues long: Arginine--tRNA ligase (541 aa).

A 'HIGH' region motif is present at residues 119–129; it reads ANPTGPLHIGH.

It belongs to the class-I aminoacyl-tRNA synthetase family. Monomer.

The protein resides in the cytoplasm. The enzyme catalyses tRNA(Arg) + L-arginine + ATP = L-arginyl-tRNA(Arg) + AMP + diphosphate. This Helicobacter acinonychis (strain Sheeba) protein is Arginine--tRNA ligase.